A 241-amino-acid polypeptide reads, in one-letter code: 2-C-methyl-D-erythritol 4-phosphate cytidylyltransferase (241 aa).

It belongs to the IspD/TarI cytidylyltransferase family. IspD subfamily.

It catalyses the reaction 2-C-methyl-D-erythritol 4-phosphate + CTP + H(+) = 4-CDP-2-C-methyl-D-erythritol + diphosphate. The protein operates within isoprenoid biosynthesis; isopentenyl diphosphate biosynthesis via DXP pathway; isopentenyl diphosphate from 1-deoxy-D-xylulose 5-phosphate: step 2/6. Functionally, catalyzes the formation of 4-diphosphocytidyl-2-C-methyl-D-erythritol from CTP and 2-C-methyl-D-erythritol 4-phosphate (MEP). The protein is 2-C-methyl-D-erythritol 4-phosphate cytidylyltransferase of Shewanella denitrificans (strain OS217 / ATCC BAA-1090 / DSM 15013).